Consider the following 257-residue polypeptide: PHD finger protein Alfin1 (257 aa).

The disordered stretch occupies residues 145–200 (SKDQLTAHNNGSNSKYKSSGKSRQSESQTKGVKMSAPVKEEVDSGEEEEEDDDEQG). Low complexity predominate over residues 153-166 (NNGSNSKYKSSGKS). A compositionally biased stretch (acidic residues) spans 187 to 199 (DSGEEEEEDDDEQ). The PHD-type zinc finger occupies 200–252 (GATCGACGDNYGTDEFWICCDMCEKWFHGKCVKITPAKAEHIKQYKCPGCSIK).

Belongs to the Alfin family. In terms of assembly, interacts with H3K4me3 and to a lesser extent with H3K4me2. In terms of tissue distribution, predominantly expressed in the roots.

The protein localises to the nucleus. Histone-binding component that specifically recognizes H3 tails trimethylated on 'Lys-4' (H3K4me3), which mark transcription start sites of virtually all active genes. Transcriptional regulator that binds specifically to DNA sequences 5'-GNGGTG-3' or 5'-GTGGNG-3', including promoter elements of the salt-inducible PRP2 gene. Plays a role in salinity tolerance. The sequence is that of PHD finger protein Alfin1 (ALFIN-1) from Medicago sativa (Alfalfa).